The sequence spans 260 residues: GTP cyclohydrolase FolE2 (260 aa).

Belongs to the GTP cyclohydrolase IV family.

The catalysed reaction is GTP + H2O = 7,8-dihydroneopterin 3'-triphosphate + formate + H(+). Its pathway is cofactor biosynthesis; 7,8-dihydroneopterin triphosphate biosynthesis; 7,8-dihydroneopterin triphosphate from GTP: step 1/1. Functionally, converts GTP to 7,8-dihydroneopterin triphosphate. This Desulfovibrio desulfuricans (strain ATCC 27774 / DSM 6949 / MB) protein is GTP cyclohydrolase FolE2.